The following is a 75-amino-acid chain: Accessory gland-specific peptide 57Da (75 aa).

A signal peptide spans 1 to 19 (MKFLALFVTLLVVLALVSA). The interval 55-75 (AAPAAAPAAPEAGLADAPAES) is disordered. The segment covering 56 to 75 (APAAAPAAPEAGLADAPAES) has biased composition (low complexity).

In terms of tissue distribution, lumen fluid of male accessory glands, becomes seminal fluid.

It localises to the secreted. Transferred from male to female during mating and may affect egglaying and behavior after mating. The protein is Accessory gland-specific peptide 57Da (Mst57Da) of Drosophila melanogaster (Fruit fly).